Consider the following 578-residue polypeptide: Potassium-transporting ATPase potassium-binding subunit (578 aa).

The next 11 membrane-spanning stretches (helical) occupy residues Ala-3 to Leu-23, Ala-67 to Leu-87, Pro-95 to Thr-115, Ala-136 to Val-156, Leu-181 to Thr-201, Leu-264 to Val-284, Trp-291 to Ala-311, Gly-396 to Gly-416, Leu-436 to Pro-456, Val-504 to Phe-524, and Leu-543 to Ala-563.

Belongs to the KdpA family. As to quaternary structure, the system is composed of three essential subunits: KdpA, KdpB and KdpC.

The protein resides in the cell inner membrane. In terms of biological role, part of the high-affinity ATP-driven potassium transport (or Kdp) system, which catalyzes the hydrolysis of ATP coupled with the electrogenic transport of potassium into the cytoplasm. This subunit binds the periplasmic potassium ions and delivers the ions to the membrane domain of KdpB through an intramembrane tunnel. This is Potassium-transporting ATPase potassium-binding subunit from Anaeromyxobacter dehalogenans (strain 2CP-C).